The sequence spans 507 residues: Cobyric acid synthase (507 aa).

Residues 251-448 (DIDIAVVHLP…LHGLFDSDAF (198 aa)) enclose the GATase cobBQ-type domain. Cysteine 332 functions as the Nucleophile in the catalytic mechanism. Histidine 440 is an active-site residue.

The protein belongs to the CobB/CobQ family. CobQ subfamily.

Its pathway is cofactor biosynthesis; adenosylcobalamin biosynthesis. Its function is as follows. Catalyzes amidations at positions B, D, E, and G on adenosylcobyrinic A,C-diamide. NH(2) groups are provided by glutamine, and one molecule of ATP is hydrogenolyzed for each amidation. The chain is Cobyric acid synthase from Klebsiella pneumoniae subsp. pneumoniae (strain ATCC 700721 / MGH 78578).